A 299-amino-acid chain; its full sequence is Oxygen-dependent coproporphyrinogen-III oxidase (299 aa).

Position 92 (Ser92) interacts with substrate. Residues His96 and His106 each contribute to the a divalent metal cation site. The active-site Proton donor is the His106. 108–110 (NVR) is a substrate binding site. A divalent metal cation-binding residues include His145 and His175. An important for dimerization region spans residues 240-275 (YVEFNLVWDRGTLFGLQTGGRTESILMSMPPLVRWE). 258 to 260 (GGR) contacts substrate.

It belongs to the aerobic coproporphyrinogen-III oxidase family. In terms of assembly, homodimer. The cofactor is a divalent metal cation.

It is found in the cytoplasm. The catalysed reaction is coproporphyrinogen III + O2 + 2 H(+) = protoporphyrinogen IX + 2 CO2 + 2 H2O. It functions in the pathway porphyrin-containing compound metabolism; protoporphyrin-IX biosynthesis; protoporphyrinogen-IX from coproporphyrinogen-III (O2 route): step 1/1. Its function is as follows. Involved in the heme biosynthesis. Catalyzes the aerobic oxidative decarboxylation of propionate groups of rings A and B of coproporphyrinogen-III to yield the vinyl groups in protoporphyrinogen-IX. The protein is Oxygen-dependent coproporphyrinogen-III oxidase of Salmonella schwarzengrund (strain CVM19633).